A 633-amino-acid polypeptide reads, in one-letter code: ATP-dependent rRNA helicase SPB4 (633 aa).

Positions 11 to 39 (FSALTPALSEWIIDAVDAMGFVKTTPVQH) match the Q motif motif. In terms of domain architecture, Helicase ATP-binding spans 42-253 (IPMFMKNSDV…RVGLRNPVRI (212 aa)). 55–62 (AVTGSGKT) contacts ATP. The segment covering 119 to 131 (EPDDEDTDMEDAD) has biased composition (acidic residues). Residues 119–140 (EPDDEDTDMEDADTPPKPTFPP) form a disordered region. The DEAD box motif lies at 201-204 (DEAD). One can recognise a Helicase C-terminal domain in the interval 292–446 (AMKKILSSLQ…EITVTDEDAK (155 aa)). A coiled-coil region spans residues 530–629 (AYKDKAREKL…KQEAEDADFE (100 aa)). 2 stretches are compositionally biased toward basic and acidic residues: residues 547-581 (DKEE…EVRR) and 588-623 (REHE…KQEA). The interval 547–633 (DKEEGTKKKQ…EDADFEGFSD (87 aa)) is disordered. A compositionally biased stretch (acidic residues) spans 624–633 (EDADFEGFSD).

It belongs to the DEAD box helicase family. DDX55/SPB4 subfamily. In terms of assembly, component of pre-60S ribosomal complexes.

Its subcellular location is the nucleus. It localises to the nucleolus. It catalyses the reaction ATP + H2O = ADP + phosphate + H(+). Functionally, ATP-binding RNA helicase involved in the biogenesis of 60S ribosomal subunits. Binds 90S pre-ribosomal particles and dissociates from pre-60S ribosomal particles after processing of 27SB pre-rRNA. Required for the normal formation of 18S rRNA through the processing of pre-rRNAs at sites A0, A1 and A2, and the normal formation of 25S and 5.8S rRNAs through the processing of pre-rRNAs at sites C1 and C2. In Phaeosphaeria nodorum (strain SN15 / ATCC MYA-4574 / FGSC 10173) (Glume blotch fungus), this protein is ATP-dependent rRNA helicase SPB4.